The chain runs to 36 residues: Glucagon-2 (36 aa).

The protein belongs to the glucagon family.

Its subcellular location is the secreted. Its function is as follows. Glucagon plays a key role in glucose metabolism and homeostasis. Regulates blood glucose by increasing gluconeogenesis and decreasing glycolysis. The sequence is that of Glucagon-2 from Huso dauricus (Kaluga sturgeon).